We begin with the raw amino-acid sequence, 481 residues long: RAC-beta serine/threonine-protein kinase (481 aa).

Met1 carries the post-translational modification N-acetylmethionine. Residues 5-108 (SVIKEGWLHK…WMRAIQMVAN (104 aa)) form the PH domain. Ser34 carries the phosphoserine modification. Cys60 and Cys77 form a disulfide bridge. Ser126 carries the phosphoserine modification. 2 O-linked (GlcNAc) serine glycosylation sites follow: Ser128 and Ser131. A Protein kinase domain is found at 152–409 (FDYLKLLGKG…AKEVMEHRFF (258 aa)). ATP is bound by residues 158–166 (LGKGTFGKV) and Lys181. The active-site Proton acceptor is the Asp275. Mn(2+)-binding residues include Asn280 and Asp293. Cys297 and Cys311 form a disulfide bridge. Residue Thr306 is glycosylated (O-linked (GlcNAc) threonine). Thr309 carries the post-translational modification Phosphothreonine; by PDPK1. O-linked (GlcNAc) threonine glycosylation occurs at Thr313. Positions 410–481 (LSINWQDVVQ…QFSYSASIRE (72 aa)) constitute an AGC-kinase C-terminal domain. Phosphoserine is present on Ser447. Thr451 carries the phosphothreonine modification. A phosphoserine; by MTOR mark is found at Ser474 and Ser478. Ser474 carries O-linked (GlcNAc) serine; alternate glycosylation.

Belongs to the protein kinase superfamily. AGC Ser/Thr protein kinase family. RAC subfamily. In terms of assembly, interacts with BTBD10. Interacts with KCTD20. Interacts (via PH domain) with MTCP1, TCL1A and TCL1B; this interaction may facilitate AKT2 oligomerization and phosphorylation, hence increasing kinase activity. Interacts with PHB2; this interaction may be important for myogenic differentiation. Interacts (when phosphorylated) with CLIP3/ClipR-59; this interaction promotes cell membrane localization. Interacts with WDFY2 (via WD repeats 1-3). Phosphorylation on Thr-309 and Ser-474 is required for full activity. Phosphorylation of the activation loop at Thr-309 by PDPK1/PDK1 is a prerequisite for full activation. Phosphorylated and activated by PDPK1/PDK1 in the presence of phosphatidylinositol 3,4,5-trisphosphate. Phosphorylation by mTORC2 in response to growth factors plays a key role in AKT1 activation: mTORC2 phosphorylates different sites depending on the context, such as Ser-474 or Ser-478, thereby facilitating subsequent phosphorylation of the activation loop by PDPK1/PDK1. Post-translationally, ubiquitinated; undergoes both 'Lys-48'- and 'Lys-63'-linked polyubiquitination. TRAF6-induced 'Lys-63'-linked AKT2 ubiquitination. When fully phosphorylated and translocated into the nucleus, undergoes 'Lys-48'-polyubiquitination catalyzed by TTC3, leading to its degradation by the proteasome. In terms of processing, O-GlcNAcylation at Thr-306 and Thr-313 inhibits activating phosphorylation at Thr-309 via disrupting the interaction between AKT and PDPK1/PDK1.

The protein resides in the cytoplasm. It is found in the nucleus. The protein localises to the cell membrane. It localises to the early endosome. It catalyses the reaction L-seryl-[protein] + ATP = O-phospho-L-seryl-[protein] + ADP + H(+). The enzyme catalyses L-threonyl-[protein] + ATP = O-phospho-L-threonyl-[protein] + ADP + H(+). With respect to regulation, two specific sites, one in the kinase domain (Thr-309) and the other in the C-terminal regulatory region (Ser-474), need to be phosphorylated for its full activation. AKT2 phosphorylation of PKP1 is induced by insulin. Inhibited by Akt inhibitor MK2206. In terms of biological role, AKT2 is one of 3 closely related serine/threonine-protein kinases (AKT1, AKT2 and AKT3) called the AKT kinases, and which regulate many processes including metabolism, proliferation, cell survival, growth and angiogenesis. This is mediated through serine and/or threonine phosphorylation of a range of downstream substrates. Over 100 substrate candidates have been reported so far, but for most of them, no isoform specificity has been reported. AKT is responsible of the regulation of glucose uptake by mediating insulin-induced translocation of the SLC2A4/GLUT4 glucose transporter to the cell surface. Phosphorylation of PTPN1 at 'Ser-50' negatively modulates its phosphatase activity preventing dephosphorylation of the insulin receptor and the attenuation of insulin signaling. Phosphorylation of TBC1D4 triggers the binding of this effector to inhibitory 14-3-3 proteins, which is required for insulin-stimulated glucose transport. AKT also regulates the storage of glucose in the form of glycogen by phosphorylating GSK3A at 'Ser-21' and GSK3B at 'Ser-9', resulting in inhibition of its kinase activity. Phosphorylation of GSK3 isoforms by AKT is also thought to be one mechanism by which cell proliferation is driven. AKT also regulates cell survival via the phosphorylation of MAP3K5 (apoptosis signal-related kinase). Phosphorylation of 'Ser-83' decreases MAP3K5 kinase activity stimulated by oxidative stress and thereby prevents apoptosis. AKT mediates insulin-stimulated protein synthesis by phosphorylating TSC2 at 'Ser-939' and 'Thr-1462', thereby activating mTORC1 signaling and leading to both phosphorylation of 4E-BP1 and in activation of RPS6KB1. AKT is involved in the phosphorylation of members of the FOXO factors (Forkhead family of transcription factors), leading to binding of 14-3-3 proteins and cytoplasmic localization. In particular, FOXO1 is phosphorylated at 'Thr-24', 'Ser-256' and 'Ser-319'. FOXO3 and FOXO4 are phosphorylated on equivalent sites. AKT has an important role in the regulation of NF-kappa-B-dependent gene transcription and positively regulates the activity of CREB1 (cyclic AMP (cAMP)-response element binding protein). The phosphorylation of CREB1 induces the binding of accessory proteins that are necessary for the transcription of pro-survival genes such as BCL2 and MCL1. AKT phosphorylates 'Ser-454' on ATP citrate lyase (ACLY), thereby potentially regulating ACLY activity and fatty acid synthesis. Activates the 3B isoform of cyclic nucleotide phosphodiesterase (PDE3B) via phosphorylation of 'Ser-273', resulting in reduced cyclic AMP levels and inhibition of lipolysis. Phosphorylates PIKFYVE on 'Ser-318', which results in increased PI(3)P-5 activity. The Rho GTPase-activating protein DLC1 is another substrate and its phosphorylation is implicated in the regulation cell proliferation and cell growth. AKT plays a role as key modulator of the AKT-mTOR signaling pathway controlling the tempo of the process of newborn neurons integration during adult neurogenesis, including correct neuron positioning, dendritic development and synapse formation. Signals downstream of phosphatidylinositol 3-kinase (PI(3)K) to mediate the effects of various growth factors such as platelet-derived growth factor (PDGF), epidermal growth factor (EGF), insulin and insulin-like growth factor I (IGF-I). AKT mediates the antiapoptotic effects of IGF-I. Essential for the SPATA13-mediated regulation of cell migration and adhesion assembly and disassembly. May be involved in the regulation of the placental development. In response to lysophosphatidic acid stimulation, inhibits the ciliogenesis cascade. In this context, phosphorylates WDR44, hence stabilizing its interaction with Rab11 and preventing the formation of the ciliogenic Rab11-FIP3-RAB3IP complex. Also phosphorylates RAB3IP/Rabin8, thus may affect RAB3IP guanine nucleotide exchange factor (GEF) activity toward Rab8, which is important for cilia growth. Phosphorylates PKP1, facilitating its interaction with YWHAG and translocation to the nucleus, ultimately resulting in a reduction in keratinocyte intercellular adhesion. Phosphorylation of PKP1 increases PKP1 protein stability, translocation to the cytoplasm away from desmosome plaques and PKP1-driven cap-dependent translation. Several AKT2-specific substrates have been identified, including ANKRD2, C2CD5, CLK2 and PITX2. May play a role in myoblast differentiation. In this context, may act through PITX2 phosphorylation. Unphosphorylated PITX2 associates with an ELAVL1/HuR-containing complex, which stabilizes cyclin mRNA and ensuring cell proliferation. Phosphorylation by AKT2 impairs this association, leading to CCND1 mRNA destabilization and progression towards differentiation. Also involved in the negative regulation of myogenesis in response to stress conditions. In this context, acts by phosphorylating ANKRD2. May also be a key regulator of glucose uptake. Regulates insulin-stimulated glucose transport by the increase of glucose transporter GLUT4 translocation from intracellular stores to the plasma membrane. In this context, acts by phosphorylating C2CD5/CDP138 on 'Ser-197' in insulin-stimulated adipocytes. Through the phosphorylation of CLK2 on 'Thr-343', involved in insulin-regulated suppression of hepatic gluconeogenesis. In Mus musculus (Mouse), this protein is RAC-beta serine/threonine-protein kinase (Akt2).